The following is a 67-amino-acid chain: Vespin (67 aa).

An N-terminal signal peptide occupies residues 1–21; that stretch reads MHPIIWELSHMVDLQAAAQKL.

In terms of tissue distribution, expressed by the venom gland.

The protein resides in the secreted. Its function is as follows. Shows contractile activity on isolated ileum smooth muscle. The sequence is that of Vespin from Vespa magnifica (Hornet).